The primary structure comprises 278 residues: 4-diphosphocytidyl-2-C-methyl-D-erythritol kinase (278 aa).

Lys9 is a catalytic residue. ATP is bound at residue Pro89 to Ala99. Residue Asp128 is part of the active site.

Belongs to the GHMP kinase family. IspE subfamily.

The enzyme catalyses 4-CDP-2-C-methyl-D-erythritol + ATP = 4-CDP-2-C-methyl-D-erythritol 2-phosphate + ADP + H(+). It participates in isoprenoid biosynthesis; isopentenyl diphosphate biosynthesis via DXP pathway; isopentenyl diphosphate from 1-deoxy-D-xylulose 5-phosphate: step 3/6. Functionally, catalyzes the phosphorylation of the position 2 hydroxy group of 4-diphosphocytidyl-2C-methyl-D-erythritol. This is 4-diphosphocytidyl-2-C-methyl-D-erythritol kinase from Cereibacter sphaeroides (strain ATCC 17029 / ATH 2.4.9) (Rhodobacter sphaeroides).